The primary structure comprises 88 residues: Large ribosomal subunit protein bL27 (88 aa).

The disordered stretch occupies residues Met-1–Val-23.

Belongs to the bacterial ribosomal protein bL27 family.

The sequence is that of Large ribosomal subunit protein bL27 from Methylorubrum populi (strain ATCC BAA-705 / NCIMB 13946 / BJ001) (Methylobacterium populi).